The following is a 133-amino-acid chain: Small ribosomal subunit protein uS11 (133 aa).

It belongs to the universal ribosomal protein uS11 family. Part of the 30S ribosomal subunit. Interacts with proteins S7 and S18. Binds to IF-3.

In terms of biological role, located on the platform of the 30S subunit, it bridges several disparate RNA helices of the 16S rRNA. Forms part of the Shine-Dalgarno cleft in the 70S ribosome. In Christiangramia forsetii (strain DSM 17595 / CGMCC 1.15422 / KT0803) (Gramella forsetii), this protein is Small ribosomal subunit protein uS11.